The sequence spans 403 residues: Phosphopentomutase (403 aa).

6 residues coordinate Mn(2+): aspartate 13, aspartate 298, histidine 303, aspartate 339, histidine 340, and histidine 351.

Belongs to the phosphopentomutase family. Requires Mn(2+) as cofactor.

Its subcellular location is the cytoplasm. It catalyses the reaction 2-deoxy-alpha-D-ribose 1-phosphate = 2-deoxy-D-ribose 5-phosphate. The catalysed reaction is alpha-D-ribose 1-phosphate = D-ribose 5-phosphate. The protein operates within carbohydrate degradation; 2-deoxy-D-ribose 1-phosphate degradation; D-glyceraldehyde 3-phosphate and acetaldehyde from 2-deoxy-alpha-D-ribose 1-phosphate: step 1/2. Its function is as follows. Isomerase that catalyzes the conversion of deoxy-ribose 1-phosphate (dRib-1-P) and ribose 1-phosphate (Rib-1-P) to deoxy-ribose 5-phosphate (dRib-5-P) and ribose 5-phosphate (Rib-5-P), respectively. In Streptococcus uberis (strain ATCC BAA-854 / 0140J), this protein is Phosphopentomutase.